We begin with the raw amino-acid sequence, 395 residues long: Dihydroorotate dehydrogenase (quinone), mitochondrial (395 aa).

Residues 1–10 (MAWRQLRKRA) constitute a mitochondrion; not cleaved transit peptide. The Mitochondrial matrix portion of the chain corresponds to 1-10 (MAWRQLRKRA). The helical transmembrane segment at 11 to 30 (LDAAIILGGGGLLFTSYLTA) threads the bilayer. The Mitochondrial intermembrane portion of the chain corresponds to 31 to 395 (TGDDHFYAEY…TDAIGVDHRR (365 aa)). FMN-binding positions include 95–99 (AGFDK) and Ser119. Lys99 is a binding site for substrate. Residue 144–148 (NRYGF) coordinates substrate. Positions 180 and 211 each coordinate FMN. 211–216 (NVSSPN) serves as a coordination point for substrate. Catalysis depends on Ser214, which acts as the Nucleophile. Positions 254 and 282 each coordinate FMN. 283–284 (NT) is a substrate binding site. FMN contacts are provided by residues Gly305, Gly334, and 355 to 356 (YT).

The protein belongs to the dihydroorotate dehydrogenase family. Type 2 subfamily. In terms of assembly, monomer. The cofactor is FMN. Post-translationally, the uncleaved transit peptide is required for mitochondrial targeting and proper membrane integration.

Its subcellular location is the mitochondrion inner membrane. The catalysed reaction is (S)-dihydroorotate + a quinone = orotate + a quinol. The protein operates within pyrimidine metabolism; UMP biosynthesis via de novo pathway; orotate from (S)-dihydroorotate (quinone route): step 1/1. Catalyzes the conversion of dihydroorotate to orotate with quinone as electron acceptor. Required for UMP biosynthesis via de novo pathway. The chain is Dihydroorotate dehydrogenase (quinone), mitochondrial (Dhodh) from Mus musculus (Mouse).